The following is a 261-amino-acid chain: MTGNEQKFSLQGKVAIVTGAGSGIGRETALCLANAGANVVVAEANETTGKETAAKVSAQTGSRGLFILTDVSRSESVQAMVIATIEAFGRLDIAVNNAALHPDASPIAELHEDHWQKIIGVNLVGVAFCLKWELQQMIQQGGGGSIINISSATINRPQEKMSAYIAAKHGITGLTQTAAVENGRHGIRVNALAPGGVATDLTMATMQELGLTEENEAARSSLFKRFAKPEEIAQSVLWLASDAASYVTGATIAVDSGLSLI.

4 residues coordinate NADP(+): Ile24, Asp70, Asn97, and Lys131. Active-site proton donor residues include Ser150 and Tyr164. Residues Tyr164, Lys168, Val197, and Thr199 each contribute to the NADP(+) site. The active-site Lowers pKa of active site Tyr is the Lys168.

It belongs to the short-chain dehydrogenases/reductases (SDR) family.

It participates in secondary metabolite biosynthesis; terpenoid biosynthesis. Short chain dehydrogenase/reductase; part of the gene cluster that mediates the biosynthesis of astellolides, drimane-type sesquiterpene esters that show antimicrobial, anti-inflammatory, and anti-tumor activities. The first step in astellolide biosynthesis is performed by the sesquiterpene cyclase astC that catalyzes the formation of drimanyl pyrophosphate from farnesyl pyrophosphate. Drimanyl pyrophosphate is then dephosphorylated by the sesquiterpene phosphatase astI to produce drimanyl monophosphate which is further dephosphorylated to drim-8-ene-11-ol by atsK. Drim-8-ene-11-ol is converted to confertifolin, probably by the cytochrome P450 monooxygenase astD and/or the dehydrogenase astE. The cytochrome P450 monooxygenases astB, astF and astJ then hydroxylate confertifolin at C6, C14, or C15 to form trihydroxy confertifolin. The nonribosomal peptide synthetase astA catalyzes ester bond formation between trihydroxy contifolin and benzoic acid (BA) or 4-hydroxy benzoic acid (4HBA), leading to the formation of dideacetyl astellolides A and B, respectively. Finally, the O-acetyltransferase astG converts dideacetyl astellolides A and B into deacetyl astellolides A and B. This Aspergillus oryzae (strain ATCC 42149 / RIB 40) (Yellow koji mold) protein is Short chain dehydrogenase/reductase astE.